Consider the following 323-residue polypeptide: tRNA-dihydrouridine synthase B (323 aa).

Residues 16-18 (PMA) and glutamine 70 each bind FMN. Cysteine 100 (proton donor) is an active-site residue. FMN contacts are provided by residues lysine 139, 200–202 (NGD), and 224–225 (GR).

It belongs to the Dus family. DusB subfamily. The cofactor is FMN.

The catalysed reaction is a 5,6-dihydrouridine in tRNA + NAD(+) = a uridine in tRNA + NADH + H(+). The enzyme catalyses a 5,6-dihydrouridine in tRNA + NADP(+) = a uridine in tRNA + NADPH + H(+). Catalyzes the synthesis of 5,6-dihydrouridine (D), a modified base found in the D-loop of most tRNAs, via the reduction of the C5-C6 double bond in target uridines. This Proteus vulgaris protein is tRNA-dihydrouridine synthase B.